A 2465-amino-acid polypeptide reads, in one-letter code: Highly reducing polyketide synthase milA (2465 aa).

In terms of domain architecture, Ketosynthase family 3 (KS3) spans 1 to 434; it reads MEPIAIVGSA…GANCHVILEG (434 aa). Residues Cys172, His311, and His355 each act as for beta-ketoacyl synthase activity in the active site. Positions 450-476 are disordered; it reads KPSLSSSPSLSPTSTSPPTPRTPANSL. The segment covering 451–463 has biased composition (low complexity); it reads PSLSSSPSLSPTS. The interval 567-888 is malonyl-CoA:ACP transacylase (MAT) domain; that stretch reads VFTGQGAQWA…CGTLSRAVDD (322 aa). The segment at 957–1096 is N-terminal hotdog fold; sequence HPLLGVRTNT…GKVQLFVGGD (140 aa). Residues 957-1265 are dehydratase (DH) domain; sequence HPLLGVRTNT…LTVSPVAPVT (309 aa). Positions 957–1267 constitute a PKS/mFAS DH domain; that stretch reads HPLLGVRTNT…VSPVAPVTAD (311 aa). The active-site Proton acceptor; for dehydratase activity is His989. Positions 1111-1267 are C-terminal hotdog fold; sequence LNEIDVDTFY…VSPVAPVTAD (157 aa). The active-site Proton donor; for dehydratase activity is Asp1174. Positions 1334–1367 are disordered; that stretch reads HSTNGLTNGHASTNGHGSTNGHISTNGHSTNGDV. A ketoreductase (KR)domain region spans residues 2095 to 2269; sequence TYFLVGMAGS…AASVINLTGV (175 aa). The Carrier domain occupies 2384–2459; sequence DMIFRAFQTV…QVVWSVVHQI (76 aa). Ser2419 carries the O-(pantetheine 4'-phosphoryl)serine modification.

Requires pantetheine 4'-phosphate as cofactor.

The enzyme catalyses 10 malonyl-CoA + acetyl-CoA + 3 AH2 + 8 NADPH + 18 H(+) = cordypyrone A + 3 A + 10 CO2 + 8 NADP(+) + 11 CoA + 8 H2O. It participates in secondary metabolite biosynthesis. In terms of biological role, highly reducing polyketide synthase (HR-PKS); part of the gene cluster that mediates the biosynthesis of cordypyrones A and B, 2 pyrones that show modest activities against pathogenic bacteria including methicillin-resistant Staphylococcus aureus (MRSA), Mycobacterium tuberculosis and Bacillus cereus. The HR-PKS milA catalyzes the formation of cordypyrones A via condensation of one acetate with 10 malonate units. Since milA lacks an enoyl reductase domain, the 2 beta-keto processing domains DH and KR of milA collaborate with the trans-enoyl reductase milB to catalyze the different levels of reduction. The cytochrome P450 monooxygenase milC then hydroxylates the C-22 of cordypyrones A to yield cordypyrones B. This chain is Highly reducing polyketide synthase milA, found in Cordyceps militaris (strain CM01) (Caterpillar fungus).